Reading from the N-terminus, the 550-residue chain is Mitochondrial distribution and morphology protein 34 (550 aa).

The 208-residue stretch at 1–208 folds into the SMP-LTD domain; it reads MAFNFNWSPL…CPEQMSKEDH (208 aa). 3 disordered regions span residues 294 to 313, 358 to 505, and 519 to 550; these read VDKP…LVKS, RNAK…ILEQ, and VYDE…TAAS. The span at 300–310 shows a compositional bias: low complexity; it reads SSTTPLTTPSL. Residues 364–376 show a composition bias toward basic residues; the sequence is ANRKKKTRVVNLR. 2 stretches are compositionally biased toward polar residues: residues 391–407 and 458–467; these read MSDS…TMSD and AEISQPQVAR. The segment covering 481–495 has biased composition (basic and acidic residues); it reads SENDKRSDSKRRGPR.

Belongs to the MDM34 family. As to quaternary structure, component of the ER-mitochondria encounter structure (ERMES) or MDM complex, composed of MMM1, MDM10, MDM12 and MDM34.

It localises to the mitochondrion outer membrane. Functionally, component of the ERMES/MDM complex, which serves as a molecular tether to connect the endoplasmic reticulum (ER) and mitochondria. Components of this complex are involved in the control of mitochondrial shape and protein biogenesis, and function in nonvesicular lipid trafficking between the ER and mitochondria. MDM34 is required for the interaction of the ER-resident membrane protein MMM1 and the outer mitochondrial membrane-resident beta-barrel protein MDM10. The chain is Mitochondrial distribution and morphology protein 34 from Pyricularia oryzae (strain 70-15 / ATCC MYA-4617 / FGSC 8958) (Rice blast fungus).